We begin with the raw amino-acid sequence, 371 residues long: Cyanide hydratase (371 aa).

Positions 6–285 constitute a CN hydrolase domain; that stretch reads YKAAAVTSEP…DGLLYVDIDL (280 aa). Glutamate 46 acts as the Proton acceptor in catalysis. The active site involves lysine 128. The active-site Nucleophile is the cysteine 163. The segment covering 339–353 has biased composition (basic and acidic residues); sequence GLNRPLDPPKDERHG. The tract at residues 339 to 371 is disordered; sequence GLNRPLDPPKDERHGIVGVAGQKSAEQRKAGDL.

The protein belongs to the carbon-nitrogen hydrolase superfamily. Nitrilase family. Oligomer of dimers, forming left-handed helical fibers.

It catalyses the reaction formamide = hydrogen cyanide + H2O. In terms of biological role, catalyzes the hydration of cyanide to formamide. Degradation of cyanide may be important for plant pathogenic fungi in infection of cyanogenic plants. Also acts on 2-cyanopyridine, fumaronitrile and benzonitrile, albeit at a lower rate. This chain is Cyanide hydratase (nit), found in Stereum hirsutum (strain FP-91666) (White-rot fungus).